We begin with the raw amino-acid sequence, 65 residues long: Large ribosomal subunit protein bL35 (65 aa).

This sequence belongs to the bacterial ribosomal protein bL35 family.

The protein is Large ribosomal subunit protein bL35 of Edwardsiella ictaluri (strain 93-146).